A 245-amino-acid polypeptide reads, in one-letter code: Ribosomal RNA small subunit methyltransferase G (245 aa).

Residues glycine 80, phenylalanine 85, 103–105 (DAT), 131–132 (AE), and arginine 150 contribute to the S-adenosyl-L-methionine site.

This sequence belongs to the methyltransferase superfamily. RNA methyltransferase RsmG family.

It is found in the cytoplasm. Its function is as follows. Specifically methylates the N7 position of a guanine in 16S rRNA. The sequence is that of Ribosomal RNA small subunit methyltransferase G from Deinococcus geothermalis (strain DSM 11300 / CIP 105573 / AG-3a).